We begin with the raw amino-acid sequence, 136 residues long: UPF0216 protein PH0358 (136 aa).

This sequence belongs to the UPF0216 family.

This is UPF0216 protein PH0358 from Pyrococcus horikoshii (strain ATCC 700860 / DSM 12428 / JCM 9974 / NBRC 100139 / OT-3).